The primary structure comprises 40 residues: Cytochrome b6-f complex subunit 5 (40 aa).

The chain crosses the membrane as a helical span at residues 5–25; that stretch reads ILLGMVLGFVPVTIAGLLVAA.

It belongs to the PetG family. As to quaternary structure, the 4 large subunits of the cytochrome b6-f complex are cytochrome b6, subunit IV (17 kDa polypeptide, PetD), cytochrome f and the Rieske protein, while the 4 small subunits are PetG, PetL, PetM and PetN. The complex functions as a dimer.

The protein localises to the cell inner membrane. Its function is as follows. Component of the cytochrome b6-f complex, which mediates electron transfer between photosystem II (PSII) and photosystem I (PSI), cyclic electron flow around PSI, and state transitions. PetG is required for either the stability or assembly of the cytochrome b6-f complex. This Gloeobacter violaceus (strain ATCC 29082 / PCC 7421) protein is Cytochrome b6-f complex subunit 5.